Reading from the N-terminus, the 439-residue chain is Homogentisate 1,2-dioxygenase (439 aa).

His-293 (proton acceptor) is an active-site residue. Positions 336 and 342 each coordinate Fe cation. Homogentisate contacts are provided by Tyr-351 and His-372. Residue His-372 participates in Fe cation binding.

Belongs to the homogentisate dioxygenase family. Hexamer; dimer of trimers. The cofactor is Fe cation.

The catalysed reaction is homogentisate + O2 = 4-maleylacetoacetate + H(+). It participates in amino-acid degradation; L-phenylalanine degradation; acetoacetate and fumarate from L-phenylalanine: step 4/6. Involved in the catabolism of homogentisate (2,5-dihydroxyphenylacetate or 2,5-OH-PhAc), a central intermediate in the degradation of phenylalanine and tyrosine. Catalyzes the oxidative ring cleavage of the aromatic ring of homogentisate to yield maleylacetoacetate. This Cupriavidus necator (strain ATCC 17699 / DSM 428 / KCTC 22496 / NCIMB 10442 / H16 / Stanier 337) (Ralstonia eutropha) protein is Homogentisate 1,2-dioxygenase.